A 374-amino-acid polypeptide reads, in one-letter code: Putative G-protein coupled receptor-like protein B0244.6 (374 aa).

Residues 1-54 (MTQNHYTTSIFANCSKHYEFEILLETCTNSTNPCHAVSQIQSAITIAYVDYYTS) lie on the Extracellular side of the membrane. The helical transmembrane segment at 55-75 (VALFSIAALLDIYCLIITIPL) threads the bilayer. The Cytoplasmic segment spans residues 76–86 (YRRMKDDSKKK). Residues 87 to 107 (YVFLITRCISGLLLVVAWLLI) traverse the membrane as a helical segment. Topologically, residues 108–137 (QCIYLRFIAPSQDNLPYYVLALALNIGSTY) are extracellular. The helical transmembrane segment at 138-158 (VLLGSYVGMAGILYLGVLNPI) threads the bilayer. Residues 159-169 (AFNQHLTLRIV) lie on the Cytoplasmic side of the membrane. A helical membrane pass occupies residues 170 to 190 (YIAVCIIFVISIFISIPLAIF). The Extracellular portion of the chain corresponds to 191-216 (QALMTVPTSSMSCTDTACAPLITLIN). Residues 217–237 (FVLVFGSLITTTLTLTFVLIS) form a helical membrane-spanning segment. Topologically, residues 238-262 (LCRHRKEFKKLDTTSNTSLNSAVRL) are cytoplasmic. Residues 263–283 (LKFTLFAVLLLVAAEVIPFVI) traverse the membrane as a helical segment. Topologically, residues 284-304 (SETKKKHSVVTGCYYFYHSGK) are extracellular. A helical membrane pass occupies residues 305–325 (VIQYAVFALTESSIWSIALII). Residues 326–374 (DPLINIIFDRTVSKKATDQVKWMRKSCVGLVRKVTKRSNPENFTETSEI) lie on the Cytoplasmic side of the membrane.

It belongs to the G-protein coupled receptor 1 family. B0244 subfamily.

It is found in the cell membrane. This chain is Putative G-protein coupled receptor-like protein B0244.6, found in Caenorhabditis elegans.